The sequence spans 79 residues: DNA-directed RNA polymerase subunit omega (79 aa).

Belongs to the RNA polymerase subunit omega family. As to quaternary structure, the RNAP catalytic core consists of 2 alpha, 1 beta, 1 beta' and 1 omega subunit. When a sigma factor is associated with the core the holoenzyme is formed, which can initiate transcription.

It carries out the reaction RNA(n) + a ribonucleoside 5'-triphosphate = RNA(n+1) + diphosphate. Functionally, promotes RNA polymerase assembly. Latches the N- and C-terminal regions of the beta' subunit thereby facilitating its interaction with the beta and alpha subunits. The polypeptide is DNA-directed RNA polymerase subunit omega (rpoZ) (Thermotoga maritima (strain ATCC 43589 / DSM 3109 / JCM 10099 / NBRC 100826 / MSB8)).